The chain runs to 68 residues: Phycobilisome 7.8 kDa linker polypeptide, allophycocyanin-associated, core (68 aa).

The CpcD-like domain occupies 2-57; sequence SRLFKITALVPSLSRTRTQRELQNTYFTKLVPYENWFREQQRIQKAGGKIIKVELA.

It belongs to the phycobilisome linker protein family.

It is found in the cellular thylakoid membrane. Functionally, rod linker protein, associated with allophycocyanin. Linker polypeptides determine the state of aggregation and the location of the disk-shaped phycobiliprotein units within the phycobilisome and modulate their spectroscopic properties in order to mediate a directed and optimal energy transfer. The polypeptide is Phycobilisome 7.8 kDa linker polypeptide, allophycocyanin-associated, core (apcC) (Nostoc sp. (strain PCC 7120 / SAG 25.82 / UTEX 2576)).